A 230-amino-acid chain; its full sequence is uncharacterized protein (230 aa).

The chain crosses the membrane as a helical span at residues 93-115 (VFLYYFLIVYTSGNVDLISRFLF).

It belongs to the DUP/COS family.

Its subcellular location is the membrane. This is an uncharacterized protein from Saccharomyces cerevisiae (strain ATCC 204508 / S288c) (Baker's yeast).